The primary structure comprises 219 residues: Octanoyltransferase (219 aa).

Residues 31–206 (TASADEIWLV…ECLRLMKASA (176 aa)) enclose the BPL/LPL catalytic domain. Residues 70-77 (RGGQVTFH), 137-139 (SLG), and 150-152 (GLA) each bind substrate. C168 acts as the Acyl-thioester intermediate in catalysis.

Belongs to the LipB family.

The protein localises to the cytoplasm. It catalyses the reaction octanoyl-[ACP] + L-lysyl-[protein] = N(6)-octanoyl-L-lysyl-[protein] + holo-[ACP] + H(+). Its pathway is protein modification; protein lipoylation via endogenous pathway; protein N(6)-(lipoyl)lysine from octanoyl-[acyl-carrier-protein]: step 1/2. Its function is as follows. Catalyzes the transfer of endogenously produced octanoic acid from octanoyl-acyl-carrier-protein onto the lipoyl domains of lipoate-dependent enzymes. Lipoyl-ACP can also act as a substrate although octanoyl-ACP is likely to be the physiological substrate. The sequence is that of Octanoyltransferase from Sodalis glossinidius (strain morsitans).